A 198-amino-acid polypeptide reads, in one-letter code: Peptidyl-tRNA hydrolase (198 aa).

Residue Tyr15 participates in tRNA binding. The Proton acceptor role is filled by His20. TRNA contacts are provided by Phe65, Asn67, and Asn113.

The protein belongs to the PTH family. As to quaternary structure, monomer.

It is found in the cytoplasm. It catalyses the reaction an N-acyl-L-alpha-aminoacyl-tRNA + H2O = an N-acyl-L-amino acid + a tRNA + H(+). Hydrolyzes ribosome-free peptidyl-tRNAs (with 1 or more amino acids incorporated), which drop off the ribosome during protein synthesis, or as a result of ribosome stalling. In terms of biological role, catalyzes the release of premature peptidyl moieties from peptidyl-tRNA molecules trapped in stalled 50S ribosomal subunits, and thus maintains levels of free tRNAs and 50S ribosomes. The chain is Peptidyl-tRNA hydrolase from Ehrlichia chaffeensis (strain ATCC CRL-10679 / Arkansas).